Here is a 451-residue protein sequence, read N- to C-terminus: F-box/LRR-repeat protein 13 (451 aa).

Residues Val-17–Phe-70 form the F-box domain. LRR repeat units follow at residues Asp-128 to Gly-155, Thr-177 to Arg-202, Val-224 to Asp-251, and Cys-335 to Ser-363. The 52-residue stretch at Gly-370–Leu-421 folds into the FBD domain.

The sequence is that of F-box/LRR-repeat protein 13 (FBL13) from Arabidopsis thaliana (Mouse-ear cress).